A 91-amino-acid chain; its full sequence is DNA-directed RNA polymerase subunit omega (91 aa).

The protein belongs to the RNA polymerase subunit omega family. The RNAP catalytic core consists of 2 alpha, 1 beta, 1 beta' and 1 omega subunit. When a sigma factor is associated with the core the holoenzyme is formed, which can initiate transcription.

It carries out the reaction RNA(n) + a ribonucleoside 5'-triphosphate = RNA(n+1) + diphosphate. In terms of biological role, promotes RNA polymerase assembly. Latches the N- and C-terminal regions of the beta' subunit thereby facilitating its interaction with the beta and alpha subunits. In Proteus mirabilis (strain HI4320), this protein is DNA-directed RNA polymerase subunit omega.